The primary structure comprises 403 residues: Argininosuccinate synthase (403 aa).

ATP-binding positions include 12–20 (AYSGGLDTS) and alanine 39. Positions 90 and 95 each coordinate L-citrulline. Position 120 (glycine 120) interacts with ATP. L-aspartate contacts are provided by threonine 122, asparagine 126, and aspartate 127. L-citrulline is bound at residue asparagine 126. The L-citrulline site is built by arginine 130, serine 182, serine 191, glutamate 267, and tyrosine 279.

Belongs to the argininosuccinate synthase family. Type 1 subfamily. In terms of assembly, homotetramer.

Its subcellular location is the cytoplasm. The catalysed reaction is L-citrulline + L-aspartate + ATP = 2-(N(omega)-L-arginino)succinate + AMP + diphosphate + H(+). Its pathway is amino-acid biosynthesis; L-arginine biosynthesis; L-arginine from L-ornithine and carbamoyl phosphate: step 2/3. This is Argininosuccinate synthase from Vesicomyosocius okutanii subsp. Calyptogena okutanii (strain HA).